The chain runs to 192 residues: Peptidyl-tRNA hydrolase (192 aa).

Y18 contacts tRNA. H23 functions as the Proton acceptor in the catalytic mechanism. TRNA contacts are provided by F69, N71, and N117.

It belongs to the PTH family. As to quaternary structure, monomer.

It localises to the cytoplasm. It carries out the reaction an N-acyl-L-alpha-aminoacyl-tRNA + H2O = an N-acyl-L-amino acid + a tRNA + H(+). In terms of biological role, hydrolyzes ribosome-free peptidyl-tRNAs (with 1 or more amino acids incorporated), which drop off the ribosome during protein synthesis, or as a result of ribosome stalling. Catalyzes the release of premature peptidyl moieties from peptidyl-tRNA molecules trapped in stalled 50S ribosomal subunits, and thus maintains levels of free tRNAs and 50S ribosomes. The polypeptide is Peptidyl-tRNA hydrolase (Neisseria gonorrhoeae (strain ATCC 700825 / FA 1090)).